Here is a 547-residue protein sequence, read N- to C-terminus: MTIIITKIADKIIKSNRVKNTLQDIHIHSSNCGCHGSFKSNSVMNQTFSSFSSLTTEKNEQQQQQLFKQFSNSKPIPMGRKVELDTSKVIDSVYFGNTENNNYRTNKGNTDYAFEASANNIRFGSGVTYEVGYDLLDMNCRNVIVFTDNNLLKLVDTDKESAVAKCLYSLEKCGIKYTIYSDVSIEPTDTSFKDAISVMGKGRYDGVVAVGGGSVMDTAKAANLYNSYPPADNDFLAYINPPIGKGLLVPGPLKRPLIAIPTTCGTASETTGVCILDIKLGDGLSAKTGIASRHLKPILGLVDPDNLLTLPSNVAISSGFDQLCHALESFTAIPFNQRSPRPLAPNQRPSYQGANPVSDVWSLRSLEMLCKNIHRFVLNPNDDYARSQMMLAASYAGLGFGNSGVHACHGMSYSISSMVKDYKPEGYYGLKKNLIPHGQSVILSAPAVFKFTAPSNPERHLLLAKIMGADISNASESDAGVLLSNQIVKLMKLLNVPNGLQALGYKESDIDSLVKGTLPQHRVTKLMPKQATYDDLYKLFKDSMTIY.

Belongs to the iron-containing alcohol dehydrogenase family. Hydroxyacid-oxoacid transhydrogenase subfamily.

The protein localises to the mitochondrion. It catalyses the reaction (S)-3-hydroxybutanoate + 2-oxoglutarate = (R)-2-hydroxyglutarate + acetoacetate. It carries out the reaction 4-hydroxybutanoate + 2-oxoglutarate = (R)-2-hydroxyglutarate + succinate semialdehyde. Catalyzes the cofactor-independent reversible oxidation of gamma-hydroxybutyrate (GHB) to succinic semialdehyde (SSA) coupled to reduction of 2-ketoglutarate (2-KG) to D-2-hydroxyglutarate (D-2-HG). L-3-hydroxybutyrate (L-3-OHB) is also a substrate for HOT when using 2-KG as hydrogen acceptor, resulting in the formation of D-2-HG. The sequence is that of Probable hydroxyacid-oxoacid transhydrogenase, mitochondrial (adhfe1) from Dictyostelium discoideum (Social amoeba).